The chain runs to 298 residues: Protoheme IX farnesyltransferase (298 aa).

9 helical membrane passes run 26-46, 52-72, 98-118, 120-140, 148-168, 174-194, 214-234, 241-261, and 278-298; these read VVGH…PGVP, FWAS…NHFL, VVGF…AFVN, LTAF…TVYL, IVIG…AVTG, ALLL…AYAI, IAFT…AGLM, SGEI…YYAI, and YSLV…YIVL.

Belongs to the UbiA prenyltransferase family. Protoheme IX farnesyltransferase subfamily.

It is found in the cell inner membrane. The enzyme catalyses heme b + (2E,6E)-farnesyl diphosphate + H2O = Fe(II)-heme o + diphosphate. It functions in the pathway porphyrin-containing compound metabolism; heme O biosynthesis; heme O from protoheme: step 1/1. Converts heme B (protoheme IX) to heme O by substitution of the vinyl group on carbon 2 of heme B porphyrin ring with a hydroxyethyl farnesyl side group. The chain is Protoheme IX farnesyltransferase from Methylococcus capsulatus (strain ATCC 33009 / NCIMB 11132 / Bath).